We begin with the raw amino-acid sequence, 595 residues long: MPTQRDSSTMSHTVACGGGGDHSHQVRVKAYYRGDIMITHFEPSISFEGLCSEVRDMCSFDNEQPFTMKWIDEEGDPCTVSSQLELEEAFRLYELNKDSELLIHVFPCVPERPGMPCPGEDKSIYRRGARRWRKLYCANGHTFQAKRFNRRAHCAICTDRIWGLGRQGYKCINCKLLVHKKCHKLVTIECGRHSLPPEPMMPMDQTMHPDHTQTVIPYNPSSHESLDQVGEEKEAMNTRESGKASSSLGLQDFDLLRVIGRGSYAKVLLVRLKKTDRIYAMKVVKKELVNDDEDIDWVQTEKHVFEQASNHPFLVGLHSCFQTESRLFFVIEYVNGGDLMFHMQRQRKLPEEHARFYSAEISLALNYLHERGIIYRDLKLDNVLLDSEGHIKLTDYGMCKEGLRPGDTTSTFCGTPNYIAPEILRGEDYGFSVDWWALGVLMFEMMAGRSPFDIVGSSDNPDQNTEDYLFQVILEKQIRIPRSLSVKAASVLKSFLNKDPKERLGCHPQTGFADIQGHPFFRNVDWDMMEQKQVVPPFKPNISGEFGLDNFDSQFTNEPVQLTPDDDDIVRKIDQSEFEGFEYINPLLMSAEECV.

Residues 1–12 show a composition bias toward polar residues; the sequence is MPTQRDSSTMSH. The segment at 1-21 is disordered; the sequence is MPTQRDSSTMSHTVACGGGGD. Pro-2 is subject to N-acetylproline. Residues 2 to 28 are required for interaction with RAB2; that stretch reads PTQRDSSTMSHTVACGGGGDHSHQVRV. Residues 2–252 are regulatory domain; the sequence is PTQRDSSTMS…KASSSLGLQD (251 aa). Thr-3 bears the Phosphothreonine mark. Ser-7 and Ser-8 each carry phosphoserine. Thr-9 is modified (phosphothreonine). The 84-residue stretch at 25 to 108 folds into the PB1 domain; it reads QVRVKAYYRG…SELLIHVFPC (84 aa). The interval 72 to 91 is interaction with PARD6A; sequence DEEGDPCTVSSQLELEEAFR. The Pseudosubstrate motif lies at 125–134; that stretch reads YRRGARRWRK. Residues 140-190 form a Phorbol-ester/DAG-type zinc finger; that stretch reads GHTFQAKRFNRRAHCAICTDRIWGLGRQGYKCINCKLLVHKKCHKLVTIEC. Residues 253–521 form the Protein kinase domain; that stretch reads FDLLRVIGRG…FADIQGHPFF (269 aa). 259–267 serves as a coordination point for ATP; that stretch reads IGRGSYAKV. Tyr-264 and Tyr-279 each carry phosphotyrosine; by SRC. ATP is bound at residue Lys-282. Tyr-333 is subject to Phosphotyrosine; by SRC. Residue Asp-377 is the Proton acceptor of the active site. Phosphothreonine occurs at positions 411 and 563. Positions 522–593 constitute an AGC-kinase C-terminal domain; sequence RNVDWDMMEQ…INPLLMSAEE (72 aa).

It belongs to the protein kinase superfamily. AGC Ser/Thr protein kinase family. PKC subfamily. Forms a complex with SQSTM1 and MP2K5. Interacts directly with SQSTM1. Interacts with IKBKB. Interacts with PARD6A, PARD6B and PARD6G. Part of a quaternary complex containing aPKC, PARD3, a PARD6 protein (PARD6A, PARD6B or PARD6G) and a GTPase protein (CDC42 or RAC1). Part of a complex with LLGL1 and PARD6B. Interacts with ADAP1/CENTA1. Interaction with SMG1, through the ZN-finger domain, activates the kinase activity. Interacts with CDK7. Forms a complex with RAB2A and GAPDH involved in recruitment onto the membrane of vesicular tubular clusters (VTCs). Interacts with ECT2 ('Thr-359' phosphorylated form). Interacts with VAMP2. Interacts with WDFY2 (via WD repeats 1-3). Post-translationally, phosphorylation at Thr-411 in the activation loop is not mandatory for activation. Upon neuronal growth factor (NGF) stimulation, phosphorylated by SRC at Tyr-264, Tyr-279 and Tyr-333. Phosphorylation on Tyr-264 facilitates binding to KPNB1/importin-beta regulating entry of PRKCI into the nucleus. Phosphorylation on Tyr-333 is important for NF-kappa-B stimulation. Phosphorylated at Thr-563 during the initial phase of long term potentiation.

The protein localises to the cytoplasm. The protein resides in the membrane. It localises to the endosome. Its subcellular location is the nucleus. It carries out the reaction L-seryl-[protein] + ATP = O-phospho-L-seryl-[protein] + ADP + H(+). The catalysed reaction is L-threonyl-[protein] + ATP = O-phospho-L-threonyl-[protein] + ADP + H(+). Atypical PKCs (PRKCI and PRKCZ) exhibit an elevated basal enzymatic activity (that may be due to the interaction with SMG1 or SQSTM1) and are not regulated by diacylglycerol, phosphatidylserine, phorbol esters or calcium ions. Two specific sites, Thr-411 (activation loop of the kinase domain) and Thr-563 (turn motif), need to be phosphorylated for its full activation. Might also be a target for novel lipid activators that are elevated during nutrient-stimulated insulin secretion. Its function is as follows. Calcium- and diacylglycerol-independent serine/ threonine-protein kinase that plays a general protective role against apoptotic stimuli, is involved in NF-kappa-B activation, cell survival, differentiation and polarity, and contributes to the regulation of microtubule dynamics in the early secretory pathway. Is necessary for BCR-ABL oncogene-mediated resistance to apoptotic drug in leukemia cells, protecting leukemia cells against drug-induced apoptosis. In cultured neurons, prevents amyloid beta protein-induced apoptosis by interrupting cell death process at a very early step. In glioblastoma cells, may function downstream of phosphatidylinositol 3-kinase (PI3K) and PDPK1 in the promotion of cell survival by phosphorylating and inhibiting the pro-apoptotic factor BAD. Can form a protein complex in non-small cell lung cancer (NSCLC) cells with PARD6A and ECT2 and regulate ECT2 oncogenic activity by phosphorylation, which in turn promotes transformed growth and invasion. In response to nerve growth factor (NGF), acts downstream of SRC to phosphorylate and activate IRAK1, allowing the subsequent activation of NF-kappa-B and neuronal cell survival. Functions in the organization of the apical domain in epithelial cells by phosphorylating EZR. This step is crucial for activation and normal distribution of EZR at the early stages of intestinal epithelial cell differentiation. Forms a protein complex with LLGL1 and PARD6B independently of PARD3 to regulate epithelial cell polarity. Plays a role in microtubule dynamics in the early secretory pathway through interaction with RAB2A and GAPDH and recruitment to vesicular tubular clusters (VTCs). In human coronary artery endothelial cells (HCAEC), is activated by saturated fatty acids and mediates lipid-induced apoptosis. Downstream of PI3K is required for insulin-stimulated glucose transport. Activates RAB4A and promotes its association with KIF3A which is required for the insulin-induced SLC2A4/GLUT4 translocation in adipocytes. Is essential in early embryogenesis and development of differentiating photoreceptors by playing a role in the establishment of epithelial and neuronal polarity. Involved in early synaptic long term potentiation phase in CA1 hippocampal cells and short term memory formation. The chain is Protein kinase C iota type (Prkci) from Mus musculus (Mouse).